A 468-amino-acid chain; its full sequence is 3-isopropylmalate dehydratase large subunit (468 aa).

The [4Fe-4S] cluster site is built by Cys-349, Cys-409, and Cys-412.

It belongs to the aconitase/IPM isomerase family. LeuC type 1 subfamily. As to quaternary structure, heterodimer of LeuC and LeuD. Requires [4Fe-4S] cluster as cofactor.

It carries out the reaction (2R,3S)-3-isopropylmalate = (2S)-2-isopropylmalate. It participates in amino-acid biosynthesis; L-leucine biosynthesis; L-leucine from 3-methyl-2-oxobutanoate: step 2/4. Its function is as follows. Catalyzes the isomerization between 2-isopropylmalate and 3-isopropylmalate, via the formation of 2-isopropylmaleate. The sequence is that of 3-isopropylmalate dehydratase large subunit from Nitrobacter winogradskyi (strain ATCC 25391 / DSM 10237 / CIP 104748 / NCIMB 11846 / Nb-255).